Consider the following 159-residue polypeptide: SsrA-binding protein (159 aa).

This sequence belongs to the SmpB family.

The protein resides in the cytoplasm. Required for rescue of stalled ribosomes mediated by trans-translation. Binds to transfer-messenger RNA (tmRNA), required for stable association of tmRNA with ribosomes. tmRNA and SmpB together mimic tRNA shape, replacing the anticodon stem-loop with SmpB. tmRNA is encoded by the ssrA gene; the 2 termini fold to resemble tRNA(Ala) and it encodes a 'tag peptide', a short internal open reading frame. During trans-translation Ala-aminoacylated tmRNA acts like a tRNA, entering the A-site of stalled ribosomes, displacing the stalled mRNA. The ribosome then switches to translate the ORF on the tmRNA; the nascent peptide is terminated with the 'tag peptide' encoded by the tmRNA and targeted for degradation. The ribosome is freed to recommence translation, which seems to be the essential function of trans-translation. The protein is SsrA-binding protein of Acidiphilium cryptum (strain JF-5).